Consider the following 479-residue polypeptide: Splicing factor ESS-2 homolog (479 aa).

An N-acetylmethionine modification is found at Met-1. Disordered regions lie at residues 1-38 (MGTPGTSAGALFLSSASAPSRKRAAGEAGEAGVARSRQ) and 95-152 (GKIS…PSLD). Thr-3 carries the post-translational modification Phosphothreonine. Residues 7–19 (SAGALFLSSASAP) are compositionally biased toward low complexity. Acidic residues predominate over residues 135-145 (DDGEAGEEEEK). A Glycyl lysine isopeptide (Lys-Gly) (interchain with G-Cter in SUMO2) cross-link involves residue Lys-145. A Phosphoserine modification is found at Ser-295. Phosphothreonine is present on Thr-389. Ser-394 and Ser-398 each carry phosphoserine. A disordered region spans residues 415-479 (RALRASYTPS…PARRKASDFF (65 aa)). Over residues 433 to 454 (TPAGGPQTPTSTPAPGSATRTP) the composition is skewed to low complexity. Residues 455–466 (LTQDPASITDNL) are compositionally biased toward polar residues.

It belongs to the ESS2 family. Identified in the spliceosome C complex. Interacts with FRA10AC1. In the adult, widely expressed with highest expression in the testis and brain. Also widely expressed in the embryo with highest levels in the anterior pons.

It is found in the nucleus. In terms of biological role, may be involved in pre-mRNA splicing. The polypeptide is Splicing factor ESS-2 homolog (Ess2) (Mus musculus (Mouse)).